Consider the following 37-residue polypeptide: Protamine Z3 (37 aa).

A disordered region spans residues 1 to 37 (ARSRSRRSYGRGRRRGGRRRRRRRRRRRGGRRGRRSR).

As to expression, testis.

It is found in the nucleus. It localises to the chromosome. Functionally, protamines substitute for histones in the chromatin of sperm during the haploid phase of spermatogenesis. They compact sperm DNA into a highly condensed, stable and inactive complex. This chain is Protamine Z3, found in Scyliorhinus canicula (Small-spotted catshark).